Consider the following 239-residue polypeptide: 1-(5-phosphoribosyl)-5-[(5-phosphoribosylamino)methylideneamino] imidazole-4-carboxamide isomerase (239 aa).

The Proton acceptor role is filled by aspartate 8. The active-site Proton donor is aspartate 130.

The protein belongs to the HisA/HisF family.

Its subcellular location is the cytoplasm. It catalyses the reaction 1-(5-phospho-beta-D-ribosyl)-5-[(5-phospho-beta-D-ribosylamino)methylideneamino]imidazole-4-carboxamide = 5-[(5-phospho-1-deoxy-D-ribulos-1-ylimino)methylamino]-1-(5-phospho-beta-D-ribosyl)imidazole-4-carboxamide. It participates in amino-acid biosynthesis; L-histidine biosynthesis; L-histidine from 5-phospho-alpha-D-ribose 1-diphosphate: step 4/9. This chain is 1-(5-phosphoribosyl)-5-[(5-phosphoribosylamino)methylideneamino] imidazole-4-carboxamide isomerase, found in Lachnoclostridium phytofermentans (strain ATCC 700394 / DSM 18823 / ISDg) (Clostridium phytofermentans).